The sequence spans 2089 residues: Mediator of DNA damage checkpoint protein 1 (2089 aa).

Over residues 1-19 (MEDTQAIDWDVEEEEETEQ) the composition is skewed to acidic residues. A disordered region spans residues 1–22 (MEDTQAIDWDVEEEEETEQSSE). The interaction with CHEK2 stretch occupies residues 1-150 (MEDTQAIDWD…SRGPLTVEET (150 aa)). Residues 2–220 (EDTQAIDWDV…PFAFNLNSDT (219 aa)) are interaction with the MRN complex. Residue T4 is modified to Phosphothreonine; by ATM. Positions 54–105 (NVVGRMPDCSVALPFPSISKQHAEIEILAWDKAPILRDCGSLNGTQILRPPK) constitute an FHA domain. The residue at position 108 (S108) is a Phosphoserine. A required for nuclear localization (NLS1) region spans residues 145-568 (LTVEETPRVQ…PAKLLVVSLE (424 aa)). T146 carries the phosphothreonine modification. S168 carries the post-translational modification Phosphoserine; by CK2. S176 carries the phosphoserine modification. 3 disordered regions span residues 185 to 248 (RTTS…AKQS), 261 to 280 (DQPL…GAGN), and 286 to 317 (GVIL…AEVH). S196 and S218 each carry phosphoserine; by CK2. T220 carries the post-translational modification Phosphothreonine; by CK2. Residues 261–274 (DQPLVKERDNDTKV) show a composition bias toward basic and acidic residues. S299 carries the post-translational modification Phosphoserine; by CK2. Phosphothreonine; by CK2 is present on T301. Over residues 306 to 317 (DSRPPGRPAEVH) the composition is skewed to basic and acidic residues. S329 is modified (phosphoserine; by CK2). T331 bears the Phosphothreonine; by CK2 mark. At S372 the chain carries Phosphoserine. Position 376 is a phosphoserine; by CK2 (S376). T378 carries the post-translational modification Phosphothreonine; by CK2. S394 and S397 each carry phosphoserine. The residue at position 402 (S402) is a Phosphoserine; by CK2. A Phosphothreonine; by CK2 modification is found at T404. S411 is subject to Phosphoserine. T449 is subject to Phosphothreonine. Phosphoserine; by CK2 is present on S453. T455 carries the post-translational modification Phosphothreonine; by CK2. A disordered region spans residues 482 to 515 (RAHSEKDQPPFGDSDDSVEADKSSPGIHLERSQA). 6 positions are modified to phosphoserine: S485, S495, S498, S504, S505, and S513. T523 is subject to Phosphothreonine. Position 590 is a phosphoserine (S590). K616 is covalently cross-linked (Glycyl lysine isopeptide (Lys-Gly) (interchain with G-Cter in SUMO1); alternate). Residue K616 forms a Glycyl lysine isopeptide (Lys-Gly) (interchain with G-Cter in SUMO2); alternate linkage. 2 disordered regions span residues 653–689 (DTLG…DNYG) and 780–1887 (SPPR…TKLN). The span at 671-685 (GREREQHVGGTKDSE) shows a compositional bias: basic and acidic residues. Residues S780 and S793 each carry the phosphoserine modification. N6-acetyllysine is present on K812. 4 stretches are compositionally biased toward basic and acidic residues: residues 819 to 844 (ETAE…ERQT), 851 to 862 (ELTKGKQDREQK), 868 to 905 (DTQR…EKQV), and 914 to 951 (AFER…RGEP). 2 positions are modified to phosphoserine: S955 and S998. Polar residues predominate over residues 955-965 (SQDQKGQASSP). Over residues 1016 to 1031 (KASRIRAAEKVSRGDQ) the composition is skewed to basic and acidic residues. S1033 is modified (phosphoserine). The segment covering 1040–1051 (PTVPEAPAPPQK) has biased composition (pro residues). Residues S1068 and S1086 each carry the phosphoserine modification. The span at 1103 to 1113 (PKPKIRTRKSS) shows a compositional bias: basic residues. The segment covering 1129–1156 (PSTSTAQPVTPKPTSQATRSRTNRSSVK) has biased composition (polar residues). The interaction with the PRKDC complex stretch occupies residues 1148 to 1610 (SRTNRSSVKT…TNRSSVKTPE (463 aa)). Position 1157 is a phosphothreonine (T1157). Over residues 1169-1187 (QPSTSTDQPVTSEPTSQVT) the composition is skewed to polar residues. T1198 carries the phosphothreonine modification. The segment covering 1210 to 1228 (QPSTSTDRPVTSEPTSQAT) has biased composition (polar residues). S1235 is subject to Phosphoserine. A Phosphothreonine modification is found at T1239. Positions 1251 to 1268 (QPSTSTDQPVTSEPTYQA) are enriched in polar residues. Phosphothreonine occurs at positions 1280 and 1302. Low complexity-rich tracts occupy residues 1304–1318 (KPTS…NMSS) and 1347–1359 (TSRT…NMSS). Positions 1375 to 1391 (PSTSTEQPVTPEPTSRA) are enriched in polar residues. Phosphoserine occurs at positions 1399 and 1400. An N6-acetyllysine modification is found at K1402. T1403 carries the phosphothreonine modification. K1413 participates in a covalent cross-link: Glycyl lysine isopeptide (Lys-Gly) (interchain with G-Cter in SUMO1); alternate. Residue K1413 forms a Glycyl lysine isopeptide (Lys-Gly) (interchain with G-Cter in SUMO2); alternate linkage. Composition is skewed to polar residues over residues 1416-1444 (PSTS…SVKT), 1456-1475 (QPST…QATR), 1498-1514 (ASAS…TSRT), and 1538-1555 (QPST…TSRA). 2 positions are modified to phosphothreonine: T1425 and T1466. T1548 is modified (phosphothreonine). S1564 bears the Phosphoserine mark. Phosphothreonine is present on residues T1567 and T1589. Polar residues predominate over residues 1579–1596 (QPSTSRNQLVTPEPTSRA). Residue S1604 is modified to Phosphoserine. Residue T1608 is modified to Phosphothreonine. Residues 1611–1620 (PVVPTAPEPH) show a composition bias toward pro residues. Residues 1624-1636 (STDQPVTPKLTSR) show a composition bias toward polar residues. Residues T1630, T1664, and T1671 each carry the phosphothreonine modification. Over residues 1678-1689 (GGQSKTLRSSTV) the composition is skewed to polar residues. S1681 is subject to Phosphoserine. T1697 is modified (phosphothreonine). The segment covering 1698–1719 (PEFQSPVTTDQPISPEPITQPS) has biased composition (polar residues). The segment at 1698–2089 (PEFQSPVTTD…VLSPLEMSST (392 aa)) is required for nuclear localization (NLS2). Residues S1702 and S1711 each carry the phosphoserine modification. A Glycyl lysine isopeptide (Lys-Gly) (interchain with G-Cter in SUMO2) cross-link involves residue K1740. S1775 bears the Phosphoserine mark. K1790 is covalently cross-linked (Glycyl lysine isopeptide (Lys-Gly) (interchain with G-Cter in SUMO2)). T1800 is modified (phosphothreonine). S1820 is modified (phosphoserine). The span at 1823 to 1836 (HQKQPQRGEVSQKT) shows a compositional bias: polar residues. A Glycyl lysine isopeptide (Lys-Gly) (interchain with G-Cter in SUMO1); alternate cross-link involves residue K1840. K1840 is covalently cross-linked (Glycyl lysine isopeptide (Lys-Gly) (interchain with G-Cter in SUMO2); alternate). Over residues 1847 to 1857 (AEKPGKEEDVV) the composition is skewed to basic and acidic residues. T1858 carries the phosphothreonine modification. BRCT domains follow at residues 1892–1970 (APKV…EYVV) and 1991–2082 (RERR…FVLS). Position 1943 is an omega-N-methylarginine (R1943).

Homodimer. Interacts with H2AX, which requires phosphorylation of H2AX on 'Ser-139'. Interacts with the MRN complex, composed of MRE11, RAD50, and NBN. Interacts with CHEK2, which requires ATM-mediated phosphorylation of 'Thr-68' within the FHA domain of CHEK2. Interacts constitutively with the BRCA1-BARD1 complex, SMC1A and TP53BP1. Interacts with ATM and FANCD2, and these interactions are reduced upon DNA damage. Also interacts with the PRKDC complex, composed of XRCC6/KU70, XRCC5/KU80 and PRKDC/XRCC7. This interaction may be required for PRKDC autophosphorylation, which is essential for DNA double strand break (DSB) repair. When phosphorylated by ATM, interacts with RNF8 (via FHA domain). Interacts with CEP164. When phosphorylated, interacts with APTX (via FHA-like domain). Interacts (when phosphorylated) with TOPBP1; promoting TOPBP1 localization to DNA damage sites during mitosis. Interacts (when phosphorylated) with NBN; promoting NBN and MRN complex localization to DNA damage sites. Post-translationally, phosphorylated upon exposure to ionizing radiation (IR), ultraviolet radiation (UV), and hydroxyurea (HU). Phosphorylation in response to IR requires ATM, NBN, and possibly CHEK2. Also phosphorylated during the G2/M phase of the cell cycle and during activation of the mitotic spindle checkpoint. Phosphorylation at Thr-4 by ATM stabilizes and enhances homodimerization via the FHA domain. Phosphorylated at Ser-168 and Ser-196 by CK2 in response to DNA damage during mitosis, promoting interaction with TOPBP1. Phosphorylated by CK2 in response to DNA damage, promoting interaction with NBN and recruitment of the MRN complex to DNA damage sites. Sumoylation at Lys-1840 by PIAS4 following DNA damage promotes ubiquitin-mediated degradation. In terms of processing, ubiquitinated by RNF4, leading to proteasomal degradation; undergoes 'Lys-48'-linked polyubiquitination. Highly expressed in testis.

The protein localises to the nucleus. It is found in the chromosome. Functionally, histone reader protein required for checkpoint-mediated cell cycle arrest in response to DNA damage within both the S phase and G2/M phases of the cell cycle. Specifically recognizes and binds histone H2AX phosphorylated at 'Ser-139', a marker of DNA damage, serving as a scaffold for the recruitment of DNA repair and signal transduction proteins to discrete foci of DNA damage sites. Also required for downstream events subsequent to the recruitment of these proteins. These include phosphorylation and activation of the ATM, CHEK1 and CHEK2 kinases, and stabilization of TP53/p53 and apoptosis. ATM and CHEK2 may also be activated independently by a parallel pathway mediated by TP53BP1. Required for chromosomal stability during mitosis by promoting recruitment of TOPBP1 to DNA double strand breaks (DSBs): TOPBP1 forms filamentous assemblies that bridge MDC1 and tether broken chromosomes during mitosis. Required for the repair of DSBs via homologous recombination by promoting recruitment of NBN component of the MRN complex to DSBs. The protein is Mediator of DNA damage checkpoint protein 1 of Homo sapiens (Human).